Reading from the N-terminus, the 174-residue chain is Nicotinamide-nucleotide adenylyltransferase (174 aa).

The protein belongs to the archaeal NMN adenylyltransferase family.

The protein resides in the cytoplasm. The enzyme catalyses beta-nicotinamide D-ribonucleotide + ATP + H(+) = diphosphate + NAD(+). The protein operates within cofactor biosynthesis; NAD(+) biosynthesis; NAD(+) from nicotinamide D-ribonucleotide: step 1/1. The sequence is that of Nicotinamide-nucleotide adenylyltransferase from Archaeoglobus fulgidus (strain ATCC 49558 / DSM 4304 / JCM 9628 / NBRC 100126 / VC-16).